Reading from the N-terminus, the 379-residue chain is Forkhead box protein F1 (379 aa).

The interval M1–R45 is disordered. Residues H12–A24 are compositionally biased toward gly residues. The segment at residues E47–R138 is a DNA-binding region (fork-head).

As to expression, expressed in lung and placenta.

Its subcellular location is the nucleus. Functionally, probable transcription activator for a number of lung-specific genes. The polypeptide is Forkhead box protein F1 (FOXF1) (Homo sapiens (Human)).